A 309-amino-acid polypeptide reads, in one-letter code: NADH-cytochrome b5 reductase 1 (309 aa).

The helical transmembrane segment at 29-49 threads the bilayer; the sequence is EFVPYAVALTAVLAGFKLFTG. One can recognise an FAD-binding FR-type domain in the interval 60 to 165; sequence TEFQEFVLKE…RGPKGAMVYT (106 aa). Residues 145 to 160 and 171 to 208 contribute to the FAD site; these read TTLK…GPKG and HIGM…KVDL.

Belongs to the flavoprotein pyridine nucleotide cytochrome reductase family. As to quaternary structure, monomer. Component of the 2-(3-amino-3-carboxypropyl)histidine synthase complex composed of dph1, dph2, dph3 and a NADH-dependent reductase, predominantly cbr1. FAD is required as a cofactor.

Its subcellular location is the mitochondrion outer membrane. It catalyses the reaction 2 Fe(III)-[cytochrome b5] + NADH = 2 Fe(II)-[cytochrome b5] + NAD(+) + H(+). It carries out the reaction 2 Fe(3+)-[Dph3] + NADH = 2 Fe(2+)-[Dph3] + NAD(+) + H(+). It functions in the pathway protein modification; peptidyl-diphthamide biosynthesis. NADH-dependent reductase for dph3 and cytochrome b5. Required for the first step of diphthamide biosynthesis, a post-translational modification of histidine which occurs in elongation factor 2. Dph1 and dph2 transfer a 3-amino-3-carboxypropyl (ACP) group from S-adenosyl-L-methionine (SAM) to a histidine residue, the reaction is assisted by a reduction system comprising dph3 and a NADH-dependent reductase, predominantly cbr1. By reducing dph3, also involved in the formation of the tRNA wobble base modification mcm5s 2U (5-methoxycarbonylmethyl-2-thiouridine), mediated by the elongator complex. The cytochrome b5/NADH cytochrome b5 reductase electron transfer system supports the catalytic activity of several sterol biosynthetic enzymes. This chain is NADH-cytochrome b5 reductase 1 (cbr1), found in Aspergillus clavatus (strain ATCC 1007 / CBS 513.65 / DSM 816 / NCTC 3887 / NRRL 1 / QM 1276 / 107).